The sequence spans 221 residues: Serine protease inhibitor 7 (221 aa).

An N-terminal signal peptide occupies residues 1–22 (MKCLFLLCLCLVPIVVFSSTFT). A propeptide spanning residues 23–28 (SKNPIN) is cleaved from the precursor. The Vacuolar targeting signal motif lies at 25–30 (NPINLP). Cystine bridges form between C76/C125 and C174/C191.

The protein belongs to the protease inhibitor I3 (leguminous Kunitz-type inhibitor) family. As to expression, tubers. Not detected in root, stem, leaves or flower bud.

The protein localises to the vacuole. Functionally, inhibitor of trypsin (serine protease). May protect the plant by inhibiting proteases of invading organisms. The sequence is that of Serine protease inhibitor 7 from Solanum tuberosum (Potato).